The primary structure comprises 505 residues: Aspartyl/glutamyl-tRNA(Asn/Gln) amidotransferase subunit B (505 aa).

Belongs to the GatB/GatE family. GatB subfamily. In terms of assembly, heterotrimer of A, B and C subunits.

It catalyses the reaction L-glutamyl-tRNA(Gln) + L-glutamine + ATP + H2O = L-glutaminyl-tRNA(Gln) + L-glutamate + ADP + phosphate + H(+). The enzyme catalyses L-aspartyl-tRNA(Asn) + L-glutamine + ATP + H2O = L-asparaginyl-tRNA(Asn) + L-glutamate + ADP + phosphate + 2 H(+). Its function is as follows. Allows the formation of correctly charged Asn-tRNA(Asn) or Gln-tRNA(Gln) through the transamidation of misacylated Asp-tRNA(Asn) or Glu-tRNA(Gln) in organisms which lack either or both of asparaginyl-tRNA or glutaminyl-tRNA synthetases. The reaction takes place in the presence of glutamine and ATP through an activated phospho-Asp-tRNA(Asn) or phospho-Glu-tRNA(Gln). This Haloarcula marismortui (strain ATCC 43049 / DSM 3752 / JCM 8966 / VKM B-1809) (Halobacterium marismortui) protein is Aspartyl/glutamyl-tRNA(Asn/Gln) amidotransferase subunit B.